Consider the following 180-residue polypeptide: Homeobox protein ceh-12 (180 aa).

Residues 15–37 (SSQNEDQKLESHPSPPSQIPNYS) form a disordered region. Positions 110–169 (MRRPRTAFSSEQLVQLEKQFSDNRYLSRPRRYQLAQQLSLSETQIKIWFQNRRMKNKRCP) form a DNA-binding region, homeobox.

In terms of tissue distribution, expressed in VB motor neurons in the ventral nerve cord.

It is found in the nucleus. Functionally, transcription factor. Plays a role, downstream from homeobox protein unc-4 and Wnt signaling, in specifying synaptic inputs to A-class motor neurons. Involved in patterning of the synaptic outputs of the postmitotic DA class cholinergic motor neurons. The polypeptide is Homeobox protein ceh-12 (ceh-12) (Caenorhabditis elegans).